Here is a 20-residue protein sequence, read N- to C-terminus: Phospholipase A2 II-5b (20 aa).

Belongs to the phospholipase A2 family. Group I subfamily. Ca(2+) serves as cofactor. In terms of tissue distribution, expressed by the venom gland.

The protein resides in the secreted. The catalysed reaction is a 1,2-diacyl-sn-glycero-3-phosphocholine + H2O = a 1-acyl-sn-glycero-3-phosphocholine + a fatty acid + H(+). Functionally, snake venom phospholipase A2 (PLA2) that exhibits weak enzymatic activity. PLA2 catalyzes the calcium-dependent hydrolysis of the 2-acyl groups in 3-sn-phosphoglycerides. In Notechis scutatus scutatus (Mainland tiger snake), this protein is Phospholipase A2 II-5b.